The following is a 315-amino-acid chain: Tryptophan prenyltransferase ComQ (315 aa).

Mg(2+)-binding residues include Asp95 and Asp99.

It belongs to the FPP/GGPP synthase family. The cofactor is Mg(2+).

Its subcellular location is the cell membrane. The catalysed reaction is L-tryptophyl-[protein] + (2E,6E)-farnesyl diphosphate = (2S,3R)-3-farnesyl-2,3-dihydro-2,N(alpha)-cyclo-L-tryptophyl-[protein] + diphosphate. Functionally, part of a major quorum-sensing system that regulates the development of genetic competence. Involved in the maturation of the competence pheromone ComX. Acts by catalyzing the transfer of a farnesyl group on the ComX pheromone. In vitro, can also catalyze the farnesylation of single tryptophan and tryptophan derivatives. The polypeptide is Tryptophan prenyltransferase ComQ (Bacillus subtilis subsp. natto (strain BEST195)).